A 364-amino-acid polypeptide reads, in one-letter code: Zinc finger protein 474 (364 aa).

Residues 1 to 10 (MERGKKKRIS) show a composition bias toward basic residues. Disordered stretches follow at residues 1-21 (MERG…HHSK) and 37-60 (SYSS…DTQK). The segment at 93-122 (GFRVCYICGREFGSQSIAIHEPQCLQKWHI) adopts a C2HC/C3H-type 1 zinc-finger fold. Zn(2+) is bound by residues Cys-97, Cys-100, His-112, and Cys-116. Residues 127-147 (LPKHLRRPEPSKPQSLSSSGS) form a disordered region. Low complexity predominate over residues 138–147 (KPQSLSSSGS). 3 C2HC/C3H-type zinc fingers span residues 164–193 (QLLP…KGEG), 220–249 (RTVI…KWKM), and 283–312 (QLVF…HPYG). Residues Cys-168, Cys-171, His-183, Cys-187, Cys-224, Cys-227, His-239, Cys-243, Cys-287, Cys-290, His-302, and Cys-306 each coordinate Zn(2+). The interval 187 to 214 (CKPKGEGPRAPHSNSSDHLTGLKKACSG) is disordered.

Requires Zn(2+) as cofactor.

This is Zinc finger protein 474 (ZNF474) from Homo sapiens (Human).